The following is a 185-amino-acid chain: Ribosome-recycling factor (185 aa).

This sequence belongs to the RRF family.

The protein resides in the cytoplasm. Functionally, responsible for the release of ribosomes from messenger RNA at the termination of protein biosynthesis. May increase the efficiency of translation by recycling ribosomes from one round of translation to another. This chain is Ribosome-recycling factor, found in Ectopseudomonas mendocina (strain ymp) (Pseudomonas mendocina).